We begin with the raw amino-acid sequence, 270 residues long: Sec-independent protein translocase protein TatC (270 aa).

6 helical membrane passes run 35-55 (LILS…YRVQ), 93-113 (AFWA…WAFI), 124-144 (WGLP…VFGY), 176-196 (VVTF…AVIL), 209-229 (QGWR…TPTP), and 231-251 (PANM…GVVL).

Belongs to the TatC family. In terms of assembly, forms a complex with TatA.

Its subcellular location is the cell membrane. In terms of biological role, part of the twin-arginine translocation (Tat) system that transports large folded proteins containing a characteristic twin-arginine motif in their signal peptide across membranes. The sequence is that of Sec-independent protein translocase protein TatC from Deinococcus radiodurans (strain ATCC 13939 / DSM 20539 / JCM 16871 / CCUG 27074 / LMG 4051 / NBRC 15346 / NCIMB 9279 / VKM B-1422 / R1).